Reading from the N-terminus, the 134-residue chain is Iron-sulfur cluster insertion protein ErpA (134 aa).

The iron-sulfur cluster site is built by Cys-47, Cys-126, and Cys-128.

The protein belongs to the HesB/IscA family. In terms of assembly, homodimer. Requires iron-sulfur cluster as cofactor.

Required for insertion of 4Fe-4S clusters for at least IspG. This is Iron-sulfur cluster insertion protein ErpA from Coxiella burnetii (strain RSA 331 / Henzerling II).